We begin with the raw amino-acid sequence, 241 residues long: uncharacterized protein (241 aa).

Positions 32–86 constitute an HTH cro/C1-type domain; sequence LKKWRNLFNIQQIELAKYLNVSPSVISDYEVGRRKNPGVNIIKKYVLALIEIDKE. The segment at residues 43 to 62 is a DNA-binding region (H-T-H motif); that stretch reads QIELAKYLNVSPSVISDYEV.

This is an uncharacterized protein from Methanocaldococcus jannaschii (strain ATCC 43067 / DSM 2661 / JAL-1 / JCM 10045 / NBRC 100440) (Methanococcus jannaschii).